Consider the following 351-residue polypeptide: Blue-sensitive opsin (351 aa).

Residues 1-40 (MKQVPEFHEDFYIPIPLDINNLSAYSPFLVPQDHLGNQGI) lie on the Extracellular side of the membrane. Residue Asn21 is glycosylated (N-linked (GlcNAc...) asparagine). A helical transmembrane segment spans residues 41–65 (FMAMSVFMFFIFIGGASINILTILC). At 66 to 77 (TIQFKKLRSHLN) the chain is on the cytoplasmic side. Residues 78–103 (YILVNLSIANLFVAIFGSPLSFYSFF) form a helical membrane-spanning segment. At 104-117 (NRYFIFGATACKIE) the chain is on the extracellular side. Cysteines 114 and 191 form a disulfide. The helical transmembrane segment at 118-137 (GFLATLGGMVGLWSLAVVAF) threads the bilayer. The Cytoplasmic portion of the chain corresponds to 138-156 (ERWLVICKPLGNFTFKTPH). The helical transmembrane segment at 157–180 (AIAGCILPWISALAASLPPLFGWS) threads the bilayer. The Extracellular segment spans residues 181–206 (RYIPEGLQCSCGPDWYTTNNKYNNES). The chain crosses the membrane as a helical span at residues 207–234 (YVMFLFCFCFAVPFGTIVFCYGQLLITL). The Cytoplasmic segment spans residues 235–256 (KLAAKAQADSASTQKAEREVTK). Residues 257–280 (MVVVMVLGFLVCWAPYASFSLWIV) form a helical membrane-spanning segment. Topologically, residues 281–288 (SHRGEEFD) are extracellular. The helical transmembrane segment at 289-313 (LRMATIPSCLSKASTVYNPVIYVLM) threads the bilayer. The residue at position 300 (Lys300) is an N6-(retinylidene)lysine. The Cytoplasmic segment spans residues 314 to 351 (NKQFRSCMMKMVCGKNIEEDEASTSSQVTQVSSVAPEK).

This sequence belongs to the G-protein coupled receptor 1 family. Opsin subfamily. Phosphorylated on some or all of the serine and threonine residues present in the C-terminal region. In terms of tissue distribution, the color pigments are found in the cone photoreceptor cells.

The protein resides in the membrane. Visual pigments are the light-absorbing molecules that mediate vision. They consist of an apoprotein, opsin, covalently linked to cis-retinal. The polypeptide is Blue-sensitive opsin (Carassius auratus (Goldfish)).